A 331-amino-acid chain; its full sequence is UPF0194 membrane protein YbhG (331 aa).

The N-terminal stretch at 1 to 15 is a signal peptide; the sequence is MKKPVVIGLAVVVLA. A coiled-coil region spans residues 107 to 208; the sequence is EEIAQAAAAV…LNLQDSTLIA (102 aa).

The protein belongs to the UPF0194 family.

The protein localises to the periplasm. The chain is UPF0194 membrane protein YbhG from Escherichia coli O139:H28 (strain E24377A / ETEC).